The primary structure comprises 663 residues: MNKQNNYSDDSIQVLEGLEAVRKRPGMYIGSTDKRGLHHLVYEIVDNSVDEVLNGYGNEIDVTINKDGSISIEDNGRGMPTGIHKSGKPTVEVIFTVLHAGGKFGQGGYKTSGGLHGVGASVVNALSEWLEVEIHRDGNIYHQSFKNGGSPSSGLVKKGKTKKTGTKVTFKPDDTIFKASTSFNFDVLSERLQESAFLLKNLKITLNDLRSGKERQEHYHYEEGIKEFVSYVNEGKEVLHDVATFSGEANGIEVDVAFQYNDQYSESILSFVNNVRTKDGGTHEVGFKTAMTRVFNDYARRINELKTKDKNLDGNDIREGLTAVVSVRIPEELLQFEGQTKSKLGTSEARSAVDSVVADKLPFYLEEKGQLSKSLVKKAIKAQQAREAARKAREDARSGKKNKRKDTLLSGKLTPAQSKNTEKNELYLVEGDSAGGSAKLGRDRKFQAILPLRGKVINTEKARLEDIFKNEEINTIIHTIGAGVGTDFKIEDSNYNRVIIMTDADTDGAHIQVLLLTFFFKYMKPLVQADRVFIALPPLYKLEKGKGKTKRVEYAWTDEELNKLQKELGKGFTLQRYKGLGEMNPEQLWETTMNPETRTLIRVQVEDEVRSSKRVTTLMGDKVQPRREWIEKHVEFGMQEDQSILDNSEVQVLENDQFDEEEI.

ATP-binding positions include Tyr7, Asn47, Asp74, 114-120, and Lys341; that span reads GLHGVGA. The segment at 386-416 is disordered; that stretch reads REAARKAREDARSGKKNKRKDTLLSGKLTPA. Positions 387–398 are enriched in basic and acidic residues; that stretch reads EAARKAREDARS. Residues 424-538 form the Toprim domain; that stretch reads NELYLVEGDS…ADRVFIALPP (115 aa). 3 residues coordinate Mg(2+): Glu430, Asp503, and Asp505.

The protein belongs to the type II topoisomerase family. ParE type 2 subfamily. Heterotetramer composed of ParC and ParE. Mg(2+) serves as cofactor. Mn(2+) is required as a cofactor. The cofactor is Ca(2+).

It carries out the reaction ATP-dependent breakage, passage and rejoining of double-stranded DNA.. Topoisomerase IV is essential for chromosome segregation. It relaxes supercoiled DNA. Performs the decatenation events required during the replication of a circular DNA molecule. The chain is DNA topoisomerase 4 subunit B from Staphylococcus aureus (strain MSSA476).